Consider the following 148-residue polypeptide: Endothelial differentiation-related factor 1 (148 aa).

The residue at position 2 (A2) is an N-acetylalanine. Position 4 is a phosphoserine (S4). K25 is subject to N6-methyllysine. Residues 34 to 67 are disordered; that stretch reads RGEDVETSKKWAAGQNKQHSITKNTAKLDRETEE. The tract at residues 37–113 is interaction with NR5A2, PPARG and NR1H3; sequence DVETSKKWAA…QVIADYESGR (77 aa). Positions 48–58 are enriched in polar residues; the sequence is QNKQHSITKNT. The interval 69–108 is interaction with TBP and NR5A1; that stretch reads HHDRVTLEVGKVIQRGRQSKGLTQKDLATKINEKPQVIAD. The IQ motif signature appears at 81–88; that stretch reads IQRGRQSK. One can recognise an HTH cro/C1-type domain in the interval 81-135; it reads IQRGRQSKGLTQKDLATKINEKPQVIADYESGRAIPNNQVLGKIERAIGLKLRGK. Residues 92–111 constitute a DNA-binding region (H-T-H motif); sequence QKDLATKINEKPQVIADYES.

As to quaternary structure, interacts with TBP and the transcription factor IID (TFIID) complex, NR5A2, NR1H3 and PPARG. Interaction with TBP is regulated by phosphorylation. Binds NR5A1, ATF1, FOS and JUN via their conserved basic region. Binding to calmodulin is regulated by calcium and phosphorylation of the IQ motif. In terms of processing, phosphorylated. Expressed in brain, liver, kidney and heart (at protein level). Also expressed in testis.

It localises to the cytoplasm. The protein localises to the nucleus. In terms of biological role, transcriptional coactivator stimulating NR5A1 and ligand-dependent NR1H3/LXRA and PPARG transcriptional activities. Enhances the DNA-binding activity of ATF1, ATF2, CREB1 and NR5A1. Regulates nitric oxid synthase activity probably by sequestering calmodulin in the cytoplasm. Might function in endothelial cells differentiation, hormone-induced cardiomyocytes hypertrophy and lipid metabolism. The sequence is that of Endothelial differentiation-related factor 1 (Edf1) from Mus musculus (Mouse).